Consider the following 73-residue polypeptide: Large ribosomal subunit protein eL20 (73 aa).

Belongs to the eukaryotic ribosomal protein eL20 family. Part of the 50S ribosomal subunit. Binds 23S rRNA.

The polypeptide is Large ribosomal subunit protein eL20 (Methanococcus aeolicus (strain ATCC BAA-1280 / DSM 17508 / OCM 812 / Nankai-3)).